Consider the following 438-residue polypeptide: Glutaryl-CoA dehydrogenase, mitochondrial (438 aa).

Residues 1-44 constitute a mitochondrion transit peptide; it reads MALRGVSVQLLSRVPGLRVFRTWVSSAAQTEKVGRTQSQLAKSS. Substrate-binding positions include 138–139 and S186; that span reads RS. Residues 177-186, S186, and 212-214 each bind FAD; these read FGLTEPNSGS and WIT. At K240 the chain carries N6-acetyllysine. 287–294 provides a ligand contact to substrate; the sequence is FGCLNNGR. Residues R319, Q330, and 387–391 contribute to the FAD site; that span reads DMLGG. E414 serves as the catalytic Proton acceptor. Residue G415 coordinates substrate. FAD-binding positions include T416, 416 to 418, and F434; that span reads THD.

It belongs to the acyl-CoA dehydrogenase family. Homotetramer. FAD serves as cofactor.

The protein resides in the mitochondrion matrix. The catalysed reaction is glutaryl-CoA + oxidized [electron-transfer flavoprotein] + 2 H(+) = (2E)-butenoyl-CoA + reduced [electron-transfer flavoprotein] + CO2. It functions in the pathway amino-acid metabolism; lysine degradation. It participates in amino-acid metabolism; tryptophan metabolism. Its function is as follows. Catalyzes the oxidative decarboxylation of glutaryl-CoA to crotonyl-CoA and CO(2) in the degradative pathway of L-lysine, L-hydroxylysine, and L-tryptophan metabolism. It uses electron transfer flavoprotein as its electron acceptor. In Macaca fascicularis (Crab-eating macaque), this protein is Glutaryl-CoA dehydrogenase, mitochondrial (GCDH).